Here is a 152-residue protein sequence, read N- to C-terminus: FMN reductase (NADH) RutF (152 aa).

Belongs to the non-flavoprotein flavin reductase family. RutF subfamily.

It catalyses the reaction FMNH2 + NAD(+) = FMN + NADH + 2 H(+). Catalyzes the reduction of FMN to FMNH2 which is used to reduce pyrimidine by RutA via the Rut pathway. This chain is FMN reductase (NADH) RutF, found in Shigella sonnei (strain Ss046).